Consider the following 134-residue polypeptide: Profilin-3 (134 aa).

Cys13 and Cys118 are joined by a disulfide. The short motif at Ala84–Thr100 is the Involved in PIP2 interaction element. A Phosphothreonine modification is found at Thr114.

The protein belongs to the profilin family. Occurs in many kinds of cells as a complex with monomeric actin in a 1:1 ratio. In terms of processing, phosphorylated by MAP kinases.

Its subcellular location is the cytoplasm. It localises to the cytoskeleton. Its function is as follows. Binds to actin and affects the structure of the cytoskeleton. At high concentrations, profilin prevents the polymerization of actin, whereas it enhances it at low concentrations. This Olea europaea (Common olive) protein is Profilin-3.